The sequence spans 268 residues: MTLLNVCGLSHHYAHGGFSGKHQHQAVLNNVSLTLKSGETVALLGRSGCGKSTLARLLVGLESPSQGNISWHGESLAKLNRAQRKAFRRDIQMVFQDSISAVNPRKTVREILREPMRHLLSLKKSEQLARASEMLKAVDLDDSVLDKRPPQLSGGQLQLVCLARALAVEPKLLILDEAVSNLDLVLQAGVIRLLKKLQQQFGTACLFITHDLRLVERFCQRVMVMDNGQIAETQAVGDKLTFSSDAGRVLQNAVLPAFPVRRRTSEKV.

In terms of domain architecture, ABC transporter spans 4–252 (LNVCGLSHHY…SSDAGRVLQN (249 aa)). ATP is bound at residue 45-52 (GRSGCGKS).

Belongs to the ABC transporter superfamily. Nickel importer (TC 3.A.1.5.3) family. As to quaternary structure, the complex is composed of two ATP-binding proteins (NikD and NikE), two transmembrane proteins (NikB and NikC) and a solute-binding protein (NikA).

It localises to the cell inner membrane. The enzyme catalyses Ni(2+)(out) + ATP + H2O = Ni(2+)(in) + ADP + phosphate + H(+). Part of the ABC transporter complex NikABCDE involved in nickel import. Responsible for energy coupling to the transport system. The polypeptide is Nickel import ATP-binding protein NikE (Shigella flexneri).